We begin with the raw amino-acid sequence, 782 residues long: U-box domain-containing protein 7 (782 aa).

A U-box domain is found at 271–345 (VPPEELRCPI…ASWCEQNGTQ (75 aa)). ARM repeat units lie at residues 456–499 (EEAR…NLAV), 502–541 (NRNKELMLTSGVIRLLEKMISSAESHGSATALYLNLSCLD), 542–581 (EAKSVIGSSQAVPFLVQLLQKEIETQCKLDALHALYNLST), 583–623 (SPNI…NLAS), and 626–665 (EGKDEAVSSQGMISSLATVLDMGDTTEQEQAVSCLLILCN). Positions 707 to 729 (EERQQRDQPSSNRDEPPQKEPAR) are enriched in basic and acidic residues. A disordered region spans residues 707-765 (EERQQRDQPSSNRDEPPQKEPARKSLSAPLSVHGSTPASASVQDYEPRVLSKSMSRRKS). The segment covering 739 to 748 (HGSTPASASV) has biased composition (polar residues).

It catalyses the reaction S-ubiquitinyl-[E2 ubiquitin-conjugating enzyme]-L-cysteine + [acceptor protein]-L-lysine = [E2 ubiquitin-conjugating enzyme]-L-cysteine + N(6)-ubiquitinyl-[acceptor protein]-L-lysine.. It functions in the pathway protein modification; protein ubiquitination. Functions as an E3 ubiquitin ligase. The protein is U-box domain-containing protein 7 (PUB7) of Arabidopsis thaliana (Mouse-ear cress).